Here is a 1486-residue protein sequence, read N- to C-terminus: Chromosome partition protein MukB (1486 aa).

34-41 lines the ATP pocket; sequence GGNGAGKS. Coiled-coil stretches lie at residues 326–418, 444–480, and 509–603; these read LEAD…QYNQ, LETFQAKELEATEKMLSLEQKMSMAQTAHSQFEQAYQ, and RHLA…RAPV. The interval 666 to 783 is flexible hinge; the sequence is PGGSEDQRLN…EVPLFGRAAR (118 aa). Coiled-coil stretches lie at residues 835 to 923, 977 to 1115, and 1209 to 1265; these read EAEI…AKLE, EMLS…TAKA, and VEAI…LQSV.

The protein belongs to the SMC family. MukB subfamily. As to quaternary structure, homodimerization via its hinge domain. Binds to DNA via its C-terminal region. Interacts, and probably forms a ternary complex, with MukE and MukF via its C-terminal region. The complex formation is stimulated by calcium or magnesium. Interacts with tubulin-related protein FtsZ.

Its subcellular location is the cytoplasm. It localises to the nucleoid. Its function is as follows. Plays a central role in chromosome condensation, segregation and cell cycle progression. Functions as a homodimer, which is essential for chromosome partition. Involved in negative DNA supercoiling in vivo, and by this means organize and compact chromosomes. May achieve or facilitate chromosome segregation by condensation DNA from both sides of a centrally located replisome during cell division. The sequence is that of Chromosome partition protein MukB from Escherichia coli O7:K1 (strain IAI39 / ExPEC).